The primary structure comprises 616 residues: Electron transfer flavoprotein-ubiquinone oxidoreductase, mitochondrial (616 aa).

The N-terminal 32 residues, 1–32 (MLVRLTKLSCPAYHWFHALKIKKCLPLCAPRC), are a transit peptide targeting the mitochondrion. An FAD-binding site is contributed by 70 to 84 (VVIVGAGPAGLSAAI). At lysine 95 the chain carries N6-acetyllysine. The stretch at 108–129 (IGAHTLSGACLDPAAFKELFPD) is an intramembrane region. N6-acetyllysine is present on residues lysine 131 and lysine 222. A ubiquinone contacts are provided by glycine 304 and glycine 305. N6-acetyllysine is present on residues lysine 356 and lysine 415. The stretch at 427-446 (TGLHVTEYEDNLKQSWVWKE) is an intramembrane region. Serine 550 carries the phosphoserine modification. The [4Fe-4S] cluster site is built by cysteine 560, cysteine 585, cysteine 588, and cysteine 591. The 4Fe-4S ferredoxin-type domain occupies 576-605 (FRLQINAQNCVHCKTCDIKDPSQNINWVVP).

It belongs to the ETF-QO/FixC family. As to quaternary structure, monomer. It depends on [4Fe-4S] cluster as a cofactor. Requires FAD as cofactor. In terms of processing, acetylation of Lys-95 and Lys-222 is observed in liver mitochondria from fasted mice but not from fed mice.

Its subcellular location is the mitochondrion inner membrane. The enzyme catalyses a ubiquinone + reduced [electron-transfer flavoprotein] = a ubiquinol + oxidized [electron-transfer flavoprotein] + H(+). In terms of biological role, accepts electrons from ETF and reduces ubiquinone. This Mus musculus (Mouse) protein is Electron transfer flavoprotein-ubiquinone oxidoreductase, mitochondrial (Etfdh).